The sequence spans 370 residues: Putative F-box/kelch-repeat protein At3g46050 (370 aa).

The F-box domain occupies 15–61; it reads PTSFSSLPDDIVLNCLARVSRFHYPTLSLVCKGFRSLLDSRELHATR. 2 Kelch repeats span residues 119–165 and 167–212; these read KIYI…VIND and IYVI…VPGS.

This is Putative F-box/kelch-repeat protein At3g46050 from Arabidopsis thaliana (Mouse-ear cress).